We begin with the raw amino-acid sequence, 251 residues long: Mlc titration factor A (251 aa).

The Zn(2+) site is built by H111, H148, H152, and E211.

It belongs to the MtfA family. In terms of assembly, interacts with Mlc. Zn(2+) serves as cofactor.

The protein resides in the cytoplasm. Its function is as follows. Involved in the modulation of the activity of the glucose-phosphotransferase system (glucose-PTS). Interacts with the transcriptional repressor Mlc, preventing its interaction with DNA and leading to the modulation of expression of genes regulated by Mlc, including ptsG, which encodes the PTS system glucose-specific EIICB component. Shows zinc-dependent metallopeptidase activity. In Salmonella arizonae (strain ATCC BAA-731 / CDC346-86 / RSK2980), this protein is Mlc titration factor A.